A 206-amino-acid polypeptide reads, in one-letter code: uncharacterized protein (206 aa).

It is found in the plastid. The protein resides in the cyanelle. This is an uncharacterized protein from Cyanophora paradoxa.